The chain runs to 531 residues: T-complex protein 1 subunit zeta (531 aa).

At Ala2 the chain carries N-acetylalanine. The residue at position 5 (Lys5) is an N6-acetyllysine. Gly39 serves as a coordination point for ADP. An ATP-binding site is contributed by Gly39. Residue Asp90 participates in Mg(2+) binding. ADP-binding residues include Gly91, Thr92, Thr93, Ser94, Thr158, and Lys159. The ATP site is built by Gly91, Thr92, and Thr93. An N6-acetyllysine modification is found at Lys199. Ser205 carries the post-translational modification Phosphoserine. Lys251 is covalently cross-linked (Glycyl lysine isopeptide (Lys-Gly) (interchain with G-Cter in SUMO2)). An N6-acetyllysine mark is found at Lys287, Lys365, Lys377, and Lys388. Ala411 contributes to the ADP binding site. ATP-binding residues include Ala411, Gly412, Asp496, and Lys501. Asp496 serves as a coordination point for ADP.

This sequence belongs to the TCP-1 chaperonin family. In terms of assembly, component of the chaperonin-containing T-complex (TRiC), a hexadecamer composed of two identical back-to-back stacked rings enclosing a protein folding chamber. Each ring is made up of eight different subunits: TCP1/CCT1, CCT2, CCT3, CCT4, CCT5, CCT6A/CCT6, CCT7, CCT8. Interacts with PACRG.

It is found in the cytoplasm. The enzyme catalyses ATP + H2O = ADP + phosphate + H(+). Functionally, component of the chaperonin-containing T-complex (TRiC), a molecular chaperone complex that assists the folding of actin, tubulin and other proteins upon ATP hydrolysis. The TRiC complex mediates the folding of WRAP53/TCAB1, thereby regulating telomere maintenance. This chain is T-complex protein 1 subunit zeta (CCT6), found in Pongo abelii (Sumatran orangutan).